A 273-amino-acid chain; its full sequence is L-fucose dehydrogenase (273 aa).

Positions 19, 21, 40, 41, 62, 63, 89, 154, 158, 187, 189, and 191 each coordinate NAD(+). Catalysis depends on Y154, which acts as the Proton acceptor.

This sequence belongs to the short-chain dehydrogenases/reductases (SDR) family. Homotetramer.

Its subcellular location is the cytoplasm. The catalysed reaction is L-fucose + NAD(+) = L-fucono-1,5-lactone + NADH + H(+). It carries out the reaction D-arabinose + NAD(+) = D-arabinono-1,5-lactone + NADH + H(+). It catalyses the reaction L-galactose + NAD(+) = L-galactono-1,5-lactone + NADH + H(+). It functions in the pathway carbohydrate degradation; L-fucose degradation. Its function is as follows. Catalyzes the NAD(+)-dependent oxidation of L-fucose, yielding L-fucono-1,5-lactone, which rapidly converts spontaneously to L-fucone-1,4-lactone. Can also act on D-arabinose and L-galactose, with lower catalytic efficiency. Does not use NADPH. May be the initial enzyme of the putative L-fucose degradation pathway in mammals. The chain is L-fucose dehydrogenase from Mus musculus (Mouse).